A 123-amino-acid polypeptide reads, in one-letter code: Glutaredoxin-like protein (123 aa).

The Glutaredoxin domain maps to 27–123 (INEVEESITN…GTLFNDLKKK (97 aa)).

It belongs to the glutaredoxin family.

The chain is Glutaredoxin-like protein (grxB) from Dictyostelium discoideum (Social amoeba).